The sequence spans 310 residues: D-erythrulose 1-phosphate 3-epimerase (310 aa).

The enzyme catalyses D-erythrulose 1-phosphate = L-erythrulose 1-phosphate. Its pathway is carbohydrate metabolism; erythritol degradation. Its function is as follows. Catalyzes the racemization of D-erythrulose 1-phosphate to L-erythrulose 1-phosphate. The protein is D-erythrulose 1-phosphate 3-epimerase of Brucella abortus (strain 2308).